Reading from the N-terminus, the 311-residue chain is tRNA-cytidine(32) 2-sulfurtransferase (311 aa).

Residues Ser-47 to Ser-52 carry the PP-loop motif motif. [4Fe-4S] cluster contacts are provided by Cys-122, Cys-125, and Cys-213.

The protein belongs to the TtcA family. As to quaternary structure, homodimer. Mg(2+) serves as cofactor. Requires [4Fe-4S] cluster as cofactor.

The protein resides in the cytoplasm. The catalysed reaction is cytidine(32) in tRNA + S-sulfanyl-L-cysteinyl-[cysteine desulfurase] + AH2 + ATP = 2-thiocytidine(32) in tRNA + L-cysteinyl-[cysteine desulfurase] + A + AMP + diphosphate + H(+). The protein operates within tRNA modification. In terms of biological role, catalyzes the ATP-dependent 2-thiolation of cytidine in position 32 of tRNA, to form 2-thiocytidine (s(2)C32). The sulfur atoms are provided by the cysteine/cysteine desulfurase (IscS) system. In Escherichia coli O81 (strain ED1a), this protein is tRNA-cytidine(32) 2-sulfurtransferase.